Consider the following 1099-residue polypeptide: Probable inorganic carbon transporter subunit DabA (1099 aa).

Positions 175-194 (RQGRRRFATTERRTRRTRRS) are disordered. Residues 176–194 (QGRRRFATTERRTRRTRRS) are compositionally biased toward basic residues. 4 residues coordinate Zn(2+): C514, D516, H722, and C737. Residues 1071 to 1099 (AGAGAAQPTRDAIELPEQASGPLPARDGQ) are disordered.

This sequence belongs to the inorganic carbon transporter (TC 9.A.2) DabA family. In terms of assembly, forms a complex with DabB. Zn(2+) is required as a cofactor.

The protein localises to the cell membrane. Functionally, part of an energy-coupled inorganic carbon pump. The chain is Probable inorganic carbon transporter subunit DabA from Parafrankia sp. (strain EAN1pec).